A 117-amino-acid chain; its full sequence is Large ribosomal subunit protein bL20 (117 aa).

It belongs to the bacterial ribosomal protein bL20 family.

Binds directly to 23S ribosomal RNA and is necessary for the in vitro assembly process of the 50S ribosomal subunit. It is not involved in the protein synthesizing functions of that subunit. The chain is Large ribosomal subunit protein bL20 from Rickettsia typhi (strain ATCC VR-144 / Wilmington).